Consider the following 142-residue polypeptide: Small ribosomal subunit protein bS6 (142 aa).

The tract at residues 110–142 is disordered; that stretch reads NKKPSHAKEKHEKTEHAHSHHAEEAKSTESHSE.

It belongs to the bacterial ribosomal protein bS6 family.

Functionally, binds together with bS18 to 16S ribosomal RNA. The chain is Small ribosomal subunit protein bS6 from Helicobacter pylori (strain G27).